The chain runs to 846 residues: uncharacterized protein (846 aa).

6 disordered regions span residues 159-217 (VPTF…INHI), 254-276 (CNLN…SNSN), 332-414 (NKLN…PLSI), 459-501 (GSSI…SNSL), 556-651 (QQQQ…NFND), and 803-846 (TTTT…NKNK). Residues 163–217 (HNQNQNNNNQNNNQNNNNNNNNNNNNNNNNNNNNNNNSQNNNNNQNNNNNHINHI) are compositionally biased toward low complexity. Over residues 355-414 (LQSPNSQSLANSSANISSNALNQSSSSQQQQPQSTSQQQQQQHKMNSSSGNISPPLPLSI) the composition is skewed to low complexity. Residues 459–482 (GSSITPKNLSPLSSSAPNTPKQFA) show a composition bias toward polar residues. Composition is skewed to low complexity over residues 483–501 (SLSS…SNSL), 568–642 (QQQQ…QPNN), and 811–846 (NNNN…NKNK).

This is an uncharacterized protein from Dictyostelium discoideum (Social amoeba).